Reading from the N-terminus, the 93-residue chain is MLKPLGDRVVLKIEEKEEKVGGFVIAGNSHAATKTAAVVAVGQGVRTLTGELVAPSVKAGDKVLVESHAGVEVKDGEETYLLVSEANILAIVE.

This sequence belongs to the GroES chaperonin family. As to quaternary structure, heptamer of 7 subunits arranged in a ring. Interacts with the chaperonin GroEL.

Its subcellular location is the cytoplasm. Together with the chaperonin GroEL, plays an essential role in assisting protein folding. The GroEL-GroES system forms a nano-cage that allows encapsulation of the non-native substrate proteins and provides a physical environment optimized to promote and accelerate protein folding. GroES binds to the apical surface of the GroEL ring, thereby capping the opening of the GroEL channel. In Streptococcus gordonii, this protein is Co-chaperonin GroES.